The following is a 143-amino-acid chain: Heat shock protein Hsp-16.41 (143 aa).

One can recognise a sHSP domain in the interval 35–140 (HNSFNFSDNI…SSRSIPINFV (106 aa)).

The protein belongs to the small heat shock protein (HSP20) family.

This is Heat shock protein Hsp-16.41 (hsp-16.41) from Caenorhabditis elegans.